The following is a 151-amino-acid chain: MADTDDKKAFDLAIRLLGEREHSRKEIITKLERRKFSEAAIDKTLERLDQLGLIDDRSFAEHFVGSRSRKKPSGKYKLRYELFQKGISETIIDEILSDYDSSAHCLDAAMKKFPFLKGDDHYKRKKLYAFLANRGFDSHSIRETLDQIFRS.

Belongs to the RecX family.

It is found in the cytoplasm. In terms of biological role, modulates RecA activity. In Chlorobium phaeobacteroides (strain BS1), this protein is Regulatory protein RecX.